A 275-amino-acid chain; its full sequence is COP9 signalosome complex subunit 7a (275 aa).

Residue serine 2 is modified to N-acetylserine. Residues 2 to 159 form the PCI domain; sequence SAEVKVTGQN…QRLEVDYSIG (158 aa). The stretch at 185-233 forms a coiled coil; it reads LSGIEEQVSRANQHKEQQLGLKQQIESEVANLKKTIKVTTAAAAAATSQ. Positions 228 to 275 are disordered; the sequence is AAATSQDPEQHLTELREPASGTNQRQPSKKASKGKGLRGSAKIWSKSN. Residues 235-244 show a composition bias toward basic and acidic residues; the sequence is PEQHLTELRE. Residues 254 to 263 show a composition bias toward basic residues; that stretch reads PSKKASKGKG.

The protein belongs to the CSN7/EIF3M family. CSN7 subfamily. In terms of assembly, component of the CSN complex, composed of COPS1/GPS1, COPS2, COPS3, COPS4, COPS5, COPS6, COPS7 (COPS7A or COPS7B), COPS8 and COPS9. In the complex, it probably interacts directly with COPS1, COPS2, COPS4, COPS5, COPS6 and COPS8. Interacts with PMF1. Interacts with the translation initiation factor EIF3S6. Interacts with CK2 and PKD. Interacts directly with ID3. Phosphorylated by CK2 and PKD kinases.

Its subcellular location is the cytoplasm. The protein localises to the nucleus. Functionally, component of the COP9 signalosome complex (CSN), a complex involved in various cellular and developmental processes. The CSN complex is an essential regulator of the ubiquitin (Ubl) conjugation pathway by mediating the deneddylation of the cullin subunits of SCF-type E3 ligase complexes, leading to decrease the Ubl ligase activity of SCF-type complexes such as SCF, CSA or DDB2. The complex is also involved in phosphorylation of p53/TP53, JUN, I-kappa-B-alpha/NFKBIA, ITPK1 and IRF8/ICSBP, possibly via its association with CK2 and PKD kinases. CSN-dependent phosphorylation of TP53 and JUN promotes and protects degradation by the Ubl system, respectively. The sequence is that of COP9 signalosome complex subunit 7a (Cops7a) from Mus musculus (Mouse).